Reading from the N-terminus, the 447-residue chain is MSFDRKDIGIKGLVLYTPNQYVEQAALEAHDGVSTGKYTIGLGLTKMAFVDDREDIYSFGLTALSQLIKRYQIDISKIGRLEVGTETIIDKSKSVKSVLMQLFGDNHNVEGIDCVNACYGGVNALFNTIDWIESSAWDGRDGIVVAGDIALYAKGNARPTGGAGCVALLVGPNAPIVFEPGLRGTYMQHAYDFYKPDLTSEYPYVDGHFSLECYVKALDGAYANYNVRDVAKNGKSQGLGLDRFDYCIFHAPTCKQVQKAYARLLYTDSAAEPSNPELEGVRELLSTLDAKKSLTDKALEKGLMAITKERFNKRVSPSVYAPTNCGNMYTASIFSCLTALLSRVPADELKGKRVGAYSYGSGLAASFFSFVVKGDVSEIAKKTNLVNDLDNRHCLTPTQYEEAIELRHQAHLKKNFTPKGSIERLRSGTYYLTGIDDMFRRSYSVKP.

The Proton donor/acceptor role is filled by Glu-86. Catalysis depends on Cys-118, which acts as the Acyl-thioester intermediate. The (3S)-3-hydroxy-3-methylglutaryl-CoA site is built by Cys-118, Asn-156, Thr-160, Ser-210, His-250, Lys-259, Asn-327, and Ser-361. Residue His-250 is the Proton donor/acceptor of the active site. Thr-398 carries the post-translational modification Phosphothreonine.

Belongs to the thiolase-like superfamily. HMG-CoA synthase family.

The catalysed reaction is acetoacetyl-CoA + acetyl-CoA + H2O = (3S)-3-hydroxy-3-methylglutaryl-CoA + CoA + H(+). It functions in the pathway metabolic intermediate biosynthesis; (R)-mevalonate biosynthesis; (R)-mevalonate from acetyl-CoA: step 2/3. Hydroxymethylglutaryl-CoA synthase; part of the first module of ergosterol biosynthesis pathway that includes the early steps of the pathway, conserved across all eukaryotes, and which results in the formation of mevalonate from acetyl-coenzyme A (acetyl-CoA). Hcs1 condenses acetyl-CoA with acetoacetyl-CoA to form hydroxymethylglutaryl-CoA (HMG-CoA). The first module starts with the action of the cytosolic acetyl-CoA acetyltransferase eg10 that catalyzes the formation of acetoacetyl-CoA. The hydroxymethylglutaryl-CoA synthases erg13 then condenses acetyl-CoA with acetoacetyl-CoA to form HMG-CoA. The rate-limiting step of the early module is the reduction to mevalonate by the 3-hydroxy-3-methylglutaryl-coenzyme A (HMG-CoA) reductases hcs1. The polypeptide is Hydroxymethylglutaryl-CoA synthase (Schizosaccharomyces pombe (strain 972 / ATCC 24843) (Fission yeast)).